The primary structure comprises 336 residues: Homoserine O-acetyltransferase (336 aa).

Residues 58 to 321 (AILVLHALTG…PHGHDAFLID (264 aa)) form the AB hydrolase-1 domain. Serine 147 (nucleophile) is an active-site residue. Position 204 (arginine 204) interacts with substrate. Residues aspartate 286 and histidine 315 contribute to the active site. Aspartate 316 serves as a coordination point for substrate.

The protein belongs to the AB hydrolase superfamily. MetX family. Homodimer.

Its subcellular location is the cytoplasm. The catalysed reaction is L-homoserine + acetyl-CoA = O-acetyl-L-homoserine + CoA. It functions in the pathway amino-acid biosynthesis; L-methionine biosynthesis via de novo pathway; O-acetyl-L-homoserine from L-homoserine: step 1/1. In terms of biological role, transfers an acetyl group from acetyl-CoA to L-homoserine, forming acetyl-L-homoserine. The chain is Homoserine O-acetyltransferase from Deinococcus geothermalis (strain DSM 11300 / CIP 105573 / AG-3a).